The primary structure comprises 434 residues: Probable exopolygalacturonase A (434 aa).

The N-terminal stretch at 1 to 19 (MKLPILVTLFITLPALCVS) is a signal peptide. 5 N-linked (GlcNAc...) asparagine glycosylation sites follow: N46, N57, N106, N199, and N207. The stretch at 232-253 (SSNIVIQDSRIVNTDDCVSFKP) is one PbH1 1 repeat. D246 (proton donor) is an active-site residue. An intrachain disulfide couples C248 to C265. The N-linked (GlcNAc...) asparagine glycan is linked to N254. The stretch at 255-275 (STQIVIQNLDCTGSHGISVGS) is one PbH1 2 repeat. The active site involves H269. N-linked (GlcNAc...) asparagine glycans are attached at residues N293, N329, and N354. A disulfide bridge connects residues C392 and C398. N400 carries an N-linked (GlcNAc...) asparagine glycan.

The protein belongs to the glycosyl hydrolase 28 family.

Its subcellular location is the secreted. The catalysed reaction is [(1-&gt;4)-alpha-D-galacturonosyl](n) + H2O = alpha-D-galacturonate + [(1-&gt;4)-alpha-D-galacturonosyl](n-1). In terms of biological role, specific in hydrolyzing the terminal glycosidic bond of polygalacturonic acid and oligogalacturonates. This is Probable exopolygalacturonase A (pgxA) from Aspergillus niger (strain ATCC MYA-4892 / CBS 513.88 / FGSC A1513).